The chain runs to 351 residues: Homeobox-leucine zipper protein HOX23 (351 aa).

The disordered stretch occupies residues 34-128 (LQDHAHGGHG…SFESGNKLEP (95 aa)). The span at 56–65 (SPFLPDLAMD) shows a compositional bias: low complexity. The segment at residues 101–160 (GGEKKRRLSVEQVRTLERSFESGNKLEPERKAQLARALGLQPRQVAIWFQNRRARWKTKQ) is a DNA-binding region (homeobox). Over residues 114-128 (RTLERSFESGNKLEP) the composition is skewed to basic and acidic residues. A leucine-zipper region spans residues 159–203 (KQLEKDFDALRRQLDAARAENDALLSLNSKLHAEIVALKGGAAAA). The disordered stretch occupies residues 227-263 (EASCSNRSENSSEINLDISRPAPPPPPPPANESPVNR). Positions 228–240 (ASCSNRSENSSEI) are enriched in polar residues. Residues 247 to 257 (PAPPPPPPPAN) are compositionally biased toward pro residues.

Belongs to the HD-ZIP homeobox family. Class I subfamily. As to expression, expressed in seedlings, roots, stems, leaf sheaths and panicles.

It localises to the nucleus. Functionally, probable transcription factor. The chain is Homeobox-leucine zipper protein HOX23 (HOX23) from Oryza sativa subsp. indica (Rice).